Reading from the N-terminus, the 1856-residue chain is DNA-directed RNA polymerase II subunit RPB1 (1856 aa).

Positions 66, 69, 76, 79, 106, 109, 149, and 177 each coordinate Zn(2+). A lid loop region spans residues 256–268 (PAVVTFGSAKNQD). Residues 314 to 331 (NCIPGLPTATQKGGRPLK) are rudder loop. D489, D491, and D493 together coordinate Mg(2+). The interval 827–839 (PSEFFFHAMGGRE) is bridging helix. K1260 is covalently cross-linked (Glycyl lysine isopeptide (Lys-Gly) (interchain with G-Cter in ubiquitin)). The tract at residues 1523 to 1856 (PTTGGMSPGA…PSSPTYDPNS (334 aa)) is disordered. Low complexity predominate over residues 1587–1856 (SMTSPHYSPT…PSSPTYDPNS (270 aa)). 27 repeat units span residues 1593–1599 (YSPTSPS), 1600–1606 (YSPTSPA), 1616–1622 (YSPTSPS), 1623–1629 (YSPTSPS), 1630–1636 (YSPTSPS), 1637–1643 (YSPTSPS), 1644–1650 (YSPTSPS), 1651–1657 (YSPTSPS), 1658–1664 (YSPSSPS), 1665–1671 (YSPSSPS), 1672–1678 (YSPSSPR), 1679–1685 (YSPTSPT), 1686–1692 (YSPTSPT), 1693–1699 (YSPTSPT), 1700–1706 (YSPTSPT), 1707–1713 (YSPTSPS), 1720–1726 (YSPSSPK), 1727–1733 (YSPSSPT), 1734–1740 (YSPTSPS), 1741–1747 (YSPTSPQ), 1748–1754 (YSPTSPQ), 1755–1761 (YSPSSPT), 1769–1775 (YNPTSPR), 1782–1788 (YSPTSPT), 1789–1795 (YSPTSPS), 1796–1802 (YTPSSPQ), and 1803–1809 (YSPTSPT). The tract at residues 1593 to 1816 (YSPTSPSYSP…SPTYTPSPSE (224 aa)) is C-terminal domain (CTD); 28 X 7 AA approximate tandem repeats of Y-[ST]-P-[ST]-S-P-[AGKNQRST]. The 28; approximate repeat unit spans residues 1810-1816 (YTPSPSE).

This sequence belongs to the RNA polymerase beta' chain family. In terms of assembly, component of the RNA polymerase II (Pol II) complex consisting of 12 subunits. Interacts with sig-7. In terms of processing, the tandem 7 residues repeats in the C-terminal domain (CTD) can be highly phosphorylated. The phosphorylation activates Pol II. Phosphorylation occurs mainly at residues 'Ser-2' and 'Ser-5' of the heptapeptide repeat and starts at the 3- to 4-cell embryonic stage. This phosphorylation also occurs in the early stages of oocyte development and is not detected in oocytes arrested at the meiotic diakinesis stage. In the somatic lineage, phosphorylation at 'Ser-2' is mediated by cdk-12 downstream of cdk-9 whereas in the germline lineage cdk-12 phosphorylates 'Ser-2' independently of cdk-9. Phosphorylation is likely mediated by cdk-7. May be dephosphorylated by fcp-1 in diakinetic oocytes and in 1-cell and 2-cell embryos. Dephosphorylated at 'Ser-5' of the heptapeptide repeats by ssup-72. The phosphorylation state is believed to result from the balanced action of site-specific CTD kinases and phosphatase, and a 'CTD code' that specifies the position of Pol II within the transcription cycle has been proposed. Following transcription stress, the elongating form of RNA polymerase II (RNA pol IIo) is polyubiquitinated via 'Lys-63'-linkages on Lys-1260 at DNA damage sites without leading to degradation: ubiquitination promotes RNA pol IIo backtracking to allow access by the transcription-coupled nucleotide excision repair (TC-NER) machinery. Subsequent DEF1-dependent polyubiquitination by the elongin complex via 'Lys-48'-linkages may lead to proteasome-mediated degradation; presumably at stalled RNA pol II where TC-NER has failed, to halt global transcription and enable 'last resort' DNA repair pathways.

It is found in the nucleus. The protein resides in the chromosome. It carries out the reaction RNA(n) + a ribonucleoside 5'-triphosphate = RNA(n+1) + diphosphate. Its function is as follows. DNA-dependent RNA polymerase catalyzes the transcription of DNA into RNA using the four ribonucleoside triphosphates as substrates. Largest and catalytic component of RNA polymerase II which synthesizes mRNA precursors and many functional non-coding RNAs. Forms the polymerase active center together with the second largest subunit. Pol II is the central component of the basal RNA polymerase II transcription machinery. It is composed of mobile elements that move relative to each other. RPB1 is part of the core element with the central large cleft, the clamp element that moves to open and close the cleft and the jaws that are thought to grab the incoming DNA template. At the start of transcription, a single-stranded DNA template strand of the promoter is positioned within the central active site cleft of Pol II. A bridging helix emanates from RPB1 and crosses the cleft near the catalytic site and is thought to promote translocation of Pol II by acting as a ratchet that moves the RNA-DNA hybrid through the active site by switching from straight to bent conformations at each step of nucleotide addition. During transcription elongation, Pol II moves on the template as the transcript elongates. Elongation is influenced by the phosphorylation status of the C-terminal domain (CTD) of Pol II largest subunit (RPB1), which serves as a platform for assembly of factors that regulate transcription initiation, elongation, termination and mRNA processing. Involved in the transcription of several genes including those involved in embryogenesis. The chain is DNA-directed RNA polymerase II subunit RPB1 from Caenorhabditis elegans.